The primary structure comprises 173 residues: ATP synthase subunit b (173 aa).

Residues 15 to 35 (LYVGDMLFYAILFIVLMALIA) form a helical membrane-spanning segment.

It belongs to the ATPase B chain family. In terms of assembly, F-type ATPases have 2 components, F(1) - the catalytic core - and F(0) - the membrane proton channel. F(1) has five subunits: alpha(3), beta(3), gamma(1), delta(1), epsilon(1). F(0) has three main subunits: a(1), b(2) and c(10-14). The alpha and beta chains form an alternating ring which encloses part of the gamma chain. F(1) is attached to F(0) by a central stalk formed by the gamma and epsilon chains, while a peripheral stalk is formed by the delta and b chains.

It is found in the cell membrane. Functionally, f(1)F(0) ATP synthase produces ATP from ADP in the presence of a proton or sodium gradient. F-type ATPases consist of two structural domains, F(1) containing the extramembraneous catalytic core and F(0) containing the membrane proton channel, linked together by a central stalk and a peripheral stalk. During catalysis, ATP synthesis in the catalytic domain of F(1) is coupled via a rotary mechanism of the central stalk subunits to proton translocation. Its function is as follows. Component of the F(0) channel, it forms part of the peripheral stalk, linking F(1) to F(0). The chain is ATP synthase subunit b from Pediococcus pentosaceus (strain ATCC 25745 / CCUG 21536 / LMG 10740 / 183-1w).